The chain runs to 199 residues: NAD(P)H-quinone oxidoreductase chain 6 (199 aa).

Transmembrane regions (helical) follow at residues 9-29 (IVSF…VVLL), 32-52 (VVYS…LYLL), 61-81 (AQVL…IMLV), 102-122 (LVCA…PWAI), and 143-163 (FLLP…GAIV).

It belongs to the complex I subunit 6 family.

The protein resides in the membrane. The catalysed reaction is a plastoquinone + NADH + (n+1) H(+)(in) = a plastoquinol + NAD(+) + n H(+)(out). The enzyme catalyses a plastoquinone + NADPH + (n+1) H(+)(in) = a plastoquinol + NADP(+) + n H(+)(out). Its function is as follows. NDH-1 shuttles electrons from NAD(P)H, via FMN and iron-sulfur (Fe-S) centers, to quinones in the respiratory chain. The immediate electron acceptor for the enzyme in this species is believed to be plastoquinone. Couples the redox reaction to proton translocation (for every two electrons transferred, four hydrogen ions are translocated across the cytoplasmic membrane), and thus conserves the redox energy in a proton gradient. In Leptolyngbya boryana (Plectonema boryanum), this protein is NAD(P)H-quinone oxidoreductase chain 6 (ndhG).